The chain runs to 774 residues: Armadillo-like helical domain-containing protein 4 (774 aa).

A signal peptide spans 1–27; the sequence is MRGPIVLHICLAFCSLLLFSVATQCLA. Topologically, residues 28–714 are extracellular; that stretch reads FPKIERRREI…KDKAGYMSGM (687 aa). Basic and acidic residues predominate over residues 41-52; it reads HAEKGQSDKMNT. Disordered stretches follow at residues 41–63 and 97–135; these read HAEK…VTSK and QPGQ…ERIS. Asparagine 57 carries N-linked (GlcNAc...) asparagine glycosylation. The N-linked (GlcNAc...) asparagine glycan is linked to asparagine 189. The segment covering 221 to 233 has biased composition (basic and acidic residues); sequence KTEKFEADTDHRT. Disordered regions lie at residues 221-275 and 600-669; these read KTEK…QPLE and ASYG…PGLE. The segment covering 258-275 has biased composition (polar residues); sequence SQMTADNTQAAATKQPLE. Over residues 607–651 the composition is skewed to acidic residues; it reads LESEEGQEDEDEEDEEDEDEEEEDEEEDEEDKDADSLDEGLDGDT. The chain crosses the membrane as a helical span at residues 715 to 735; the sequence is LVPVGVGIAGALFILGALYSI. Topologically, residues 736–774 are cytoplasmic; sequence KVMNRRRRNGFKRHKRKQREFNSMQDRVMLLADSSEDEF. Phosphoserine is present on residues serine 769 and serine 770.

In terms of assembly, interacts with IL6ST; this interaction prevents IL6ST protein homodimerization and bridges ARMH4 with IL6R and STAT3 and therefore inhibits phosphorylation of STAT3 at 'Tyr-705'. Interacts (via cytoplasmic tail) with RICTOR; this interaction bridges ARMH4 to the mTORC2 complex and inhibits the mTORC2 kinase activity. As to expression, expressed in podocytes.

The protein localises to the membrane. In terms of biological role, may modulate immune response and may play a role in inflammation. Down-modulates STAT3 signaling throught direct interaction with IL6ST, resulting in the inhibition of phosphorylation of STAT3 at 'Tyr-705'. May negatively regulates AKT signaling by modulating the activity of mTORC2 complex through RICTOR interaction. The protein is Armadillo-like helical domain-containing protein 4 of Homo sapiens (Human).